The following is a 246-amino-acid chain: Aquaporin AqpM (246 aa).

The Cytoplasmic portion of the chain corresponds to 1-11 (MVSLTKRCIAE). Residues 12–32 (FIGTFFLVFFGAGAAAITLMI) traverse the membrane as a helical segment. The Extracellular portion of the chain corresponds to 33-45 (ASGGTAPNPFNIG). Residues 46–66 (IGLLGGLGDWVAIGLAFGFAI) traverse the membrane as a helical segment. Residues 67–69 (AAS) lie on the Cytoplasmic side of the membrane. A helical transmembrane segment spans residues 70 to 90 (IYALGNISGCHINPAVTIGLW). Residues 82–84 (NPA) carry the NPA 1 motif. Over 91–103 (SVKKFPGRDVVPY) the chain is Extracellular. The helical transmembrane segment at 104 to 124 (IIAQLLGAAFASFIFLQCAGI) threads the bilayer. The Cytoplasmic portion of the chain corresponds to 125–145 (TAATIGGLGATAPFPGIGYWQ). Residues 146–166 (AMLAETVGTFLLMITIMGIAV) traverse the membrane as a helical segment. At 167–172 (DERAPK) the chain is on the extracellular side. A helical membrane pass occupies residues 173 to 193 (GFAGIIIGLTVAGIITTIGNI). Residues 194-217 (TGSSLNPARTFGPYLNDMVFAGTN) are Cytoplasmic-facing. Positions 199–201 (NPA) match the NPA 2 motif. Residues 218 to 238 (LWNYFPIYVIGPVVGAVLAAL) traverse the membrane as a helical segment. Residues 239–246 (TYQYLTSE) lie on the Extracellular side of the membrane.

The protein belongs to the MIP/aquaporin (TC 1.A.8) family. As to quaternary structure, homotetramer.

The protein resides in the cell membrane. Functionally, channel that permits osmotically driven movement of water in both directions. It mediates rapid entry or exit of water in response to abrupt changes in osmolarity. Also exhibits a transient but reproducible increase in the initial glycerol flux. In Methanothermobacter thermautotrophicus (strain ATCC 29096 / DSM 1053 / JCM 10044 / NBRC 100330 / Delta H) (Methanobacterium thermoautotrophicum), this protein is Aquaporin AqpM (aqpM).